Here is a 1001-residue protein sequence, read N- to C-terminus: Translation initiation factor IF-2 (1001 aa).

The segment at 56–418 (PDYVHDPNAV…VEAGPPPISR (363 aa)) is disordered. The segment covering 70–84 (TEAHEERHEHEEAHE) has biased composition (basic and acidic residues). The span at 85–108 (PAAAPKAAVEPETPVAPAPEAAPA) shows a compositional bias: low complexity. The span at 109–120 (AKEERPAPEEPA) shows a compositional bias: basic and acidic residues. Composition is skewed to pro residues over residues 136–170 (IHPP…PHAP), 180–194 (PARP…PSQT), 204–217 (RPAP…PTTT), 229–252 (QPFP…PPQQ), 305–322 (PAAP…PVPG), and 345–357 (GMPP…PRPQ). Basic and acidic residues predominate over residues 379-410 (SRGRPGDRRPVRQQRERTEEEKILRPQRRHVE). The tr-type G domain maps to 499–668 (RRAPVVTIMG…LLVADMQDLK (170 aa)). The segment at 508-515 (GHVDHGKT) is G1. 508–515 (GHVDHGKT) is a binding site for GTP. The tract at residues 533–537 (GITQH) is G2. Residues 554–557 (DTPG) form a G3 region. GTP is bound by residues 554–558 (DTPGH) and 608–611 (NKID). A G4 region spans residues 608–611 (NKID). A G5 region spans residues 644 to 646 (SAR).

Belongs to the TRAFAC class translation factor GTPase superfamily. Classic translation factor GTPase family. IF-2 subfamily.

It localises to the cytoplasm. In terms of biological role, one of the essential components for the initiation of protein synthesis. Protects formylmethionyl-tRNA from spontaneous hydrolysis and promotes its binding to the 30S ribosomal subunits. Also involved in the hydrolysis of GTP during the formation of the 70S ribosomal complex. This Solibacter usitatus (strain Ellin6076) protein is Translation initiation factor IF-2.